The primary structure comprises 320 residues: GTP 3',8-cyclase (320 aa).

Residues 5-225 enclose the Radical SAM core domain; the sequence is QFGRKINYLR…IQLIKKDEKA (221 aa). Residue Arg14 participates in GTP binding. [4Fe-4S] cluster-binding residues include Cys21 and Cys25. Tyr27 provides a ligand contact to S-adenosyl-L-methionine. Residue Cys28 participates in [4Fe-4S] cluster binding. Arg64 is a GTP binding site. An S-adenosyl-L-methionine-binding site is contributed by Gly68. A GTP-binding site is contributed by Thr95. Ser119 is an S-adenosyl-L-methionine binding site. Residue Lys155 participates in GTP binding. S-adenosyl-L-methionine is bound at residue Met189. Positions 248 and 251 each coordinate [4Fe-4S] cluster. 253 to 255 serves as a coordination point for GTP; sequence RIR. Cys265 serves as a coordination point for [4Fe-4S] cluster.

The protein belongs to the radical SAM superfamily. MoaA family. Monomer and homodimer. It depends on [4Fe-4S] cluster as a cofactor.

The enzyme catalyses GTP + AH2 + S-adenosyl-L-methionine = (8S)-3',8-cyclo-7,8-dihydroguanosine 5'-triphosphate + 5'-deoxyadenosine + L-methionine + A + H(+). The protein operates within cofactor biosynthesis; molybdopterin biosynthesis. Functionally, catalyzes the cyclization of GTP to (8S)-3',8-cyclo-7,8-dihydroguanosine 5'-triphosphate. The protein is GTP 3',8-cyclase of Campylobacter jejuni subsp. jejuni serotype O:6 (strain 81116 / NCTC 11828).